Here is a 132-residue protein sequence, read N- to C-terminus: Large ribosomal subunit protein bL19 (132 aa).

The protein belongs to the bacterial ribosomal protein bL19 family.

Functionally, this protein is located at the 30S-50S ribosomal subunit interface and may play a role in the structure and function of the aminoacyl-tRNA binding site. The protein is Large ribosomal subunit protein bL19 of Persephonella marina (strain DSM 14350 / EX-H1).